The chain runs to 2090 residues: Non-reducing polyketide synthase rdc1 (2090 aa).

Positions 12–250 (FLVGDQVDSW…NPLNIHALQH (239 aa)) are N-terminal acylcarrier protein transacylase (SAT) domain. The Ketosynthase family 3 (KS3) domain occupies 375–808 (TGRIAIVGMS…GGNACLLLED (434 aa)). Active-site for beta-ketoacyl synthase activity residues include Cys551, His686, and His726. A malonyl-CoA:ACP transacylase (MAT) domain region spans residues 912–1195 (IFVFSGQGSH…NQVCTQFVRA (284 aa)). The For acyl/malonyl transferase activity role is filled by Ser1003. The interval 1293–1433 (QHVAKESSSN…LVVQKNVKAL (141 aa)) is N-terminal hotdog fold. One can recognise a PKS/mFAS DH domain in the interval 1293 to 1607 (QHVAKESSSN…FVRISNALLQ (315 aa)). The segment at 1304 to 1604 (GKLEITFRAS…NLSFVRISNA (301 aa)) is product template (PT) domain. A C-terminal hotdog fold region spans residues 1459–1607 (QGHWLKHDIF…FVRISNALLQ (149 aa)). The segment at 1615 to 1650 (SKPVGRGMAKQEKQEVPATTEVVRQPEKEESRHSVD) is disordered. Positions 1638-1649 (RQPEKEESRHSV) are enriched in basic and acidic residues. The region spanning 1649–1726 (VDTPSFSDVL…DIKRAFDILT (78 aa)) is the Carrier domain. Ser1686 bears the O-(pantetheine 4'-phosphoryl)serine mark. The segment at 1820–1964 (ADGTGSIATY…THQHLKALFA (145 aa)) is thioesterase (TE) domain.

It participates in secondary metabolite biosynthesis. Non-reducing polyketide synthase; part of the gene cluster that mediates the biosynthesis of radicicol, a resorcylic acid lactone (RAL) that irreversibly inhibits the HSP90 molecular chaperone, an important target for cancer chemotherapy. The radicicol cluster encodes only two apparent post-PKS enzymes, a cytochrome P450 monooxygenase (rdc4) and a non-heme halogenase (rdc2) that could introduce the epoxide and the chlorine, respectively. If this cluster includes all the genes required for radicicol biosynthesis, the remaining structural features of radicicol are presumably generated by the PKSs rdc1 and rdc5. The C-2' ketone could arise if the R-PKS rdc5 and NR-PKS rdc1 each carry out four iterations, in contrast to the five iteration-three iteration split for the hypothemycin PKSs. The origin of the cis 5',6' double bond is not known. The radicicol R-PKS rdc5 ER domain may catalyze either double bond isomerization or reduction in the third iteration. This is Non-reducing polyketide synthase rdc1 from Metacordyceps chlamydosporia (Nematophagous fungus).